We begin with the raw amino-acid sequence, 78 residues long: Large ribosomal subunit protein bL28 (78 aa).

The tract at residues 1-20 is disordered; it reads MSRVCQVTGKRPVTGNNRSH.

The protein belongs to the bacterial ribosomal protein bL28 family.

This is Large ribosomal subunit protein bL28 from Vibrio campbellii (strain ATCC BAA-1116).